The chain runs to 441 residues: ATP-dependent protease ATPase subunit HslU (441 aa).

ATP-binding positions include valine 18, 60-65 (GVGKTE), aspartate 253, glutamate 319, and arginine 391.

The protein belongs to the ClpX chaperone family. HslU subfamily. As to quaternary structure, a double ring-shaped homohexamer of HslV is capped on each side by a ring-shaped HslU homohexamer. The assembly of the HslU/HslV complex is dependent on binding of ATP.

It is found in the cytoplasm. Its function is as follows. ATPase subunit of a proteasome-like degradation complex; this subunit has chaperone activity. The binding of ATP and its subsequent hydrolysis by HslU are essential for unfolding of protein substrates subsequently hydrolyzed by HslV. HslU recognizes the N-terminal part of its protein substrates and unfolds these before they are guided to HslV for hydrolysis. This chain is ATP-dependent protease ATPase subunit HslU, found in Nitratidesulfovibrio vulgaris (strain DP4) (Desulfovibrio vulgaris).